Consider the following 153-residue polypeptide: MSSVSAAGATPPASPGCIAGIGMDLLRIERIERALARHGDRFAQKILGPEELAKFHARRRRDPARGVRFLATRFAAKEAFSKAIGLGMRMPMSWRRVQTLNALGGRPVLVIGAELADWFDARFGAAHVSITDESDMAAAYVIVERKPAPDGRP.

2 residues coordinate Mg(2+): D24 and E78.

This sequence belongs to the P-Pant transferase superfamily. AcpS family. The cofactor is Mg(2+).

The protein localises to the cytoplasm. The catalysed reaction is apo-[ACP] + CoA = holo-[ACP] + adenosine 3',5'-bisphosphate + H(+). Its function is as follows. Transfers the 4'-phosphopantetheine moiety from coenzyme A to a Ser of acyl-carrier-protein. In Bordetella parapertussis (strain 12822 / ATCC BAA-587 / NCTC 13253), this protein is Holo-[acyl-carrier-protein] synthase.